The following is a 277-amino-acid chain: Large ribosomal subunit protein uL2 (277 aa).

Disordered regions lie at residues 37–59 (KNSTGGRNHNGHITTRHRGGGHK) and 221–265 (RGTA…KRTD). Residues 50–59 (TTRHRGGGHK) show a composition bias toward basic residues. The span at 229–241 (DHPHGGGEGRTGE) shows a compositional bias: basic and acidic residues.

The protein belongs to the universal ribosomal protein uL2 family. Part of the 50S ribosomal subunit. Forms a bridge to the 30S subunit in the 70S ribosome.

Functionally, one of the primary rRNA binding proteins. Required for association of the 30S and 50S subunits to form the 70S ribosome, for tRNA binding and peptide bond formation. It has been suggested to have peptidyltransferase activity; this is somewhat controversial. Makes several contacts with the 16S rRNA in the 70S ribosome. The sequence is that of Large ribosomal subunit protein uL2 from Chromobacterium violaceum (strain ATCC 12472 / DSM 30191 / JCM 1249 / CCUG 213 / NBRC 12614 / NCIMB 9131 / NCTC 9757 / MK).